The following is a 452-amino-acid chain: Down-regulator of invasive growth 1 (452 aa).

Disordered stretches follow at residues 1 to 145 (MAVS…SAPA) and 262 to 311 (RNKR…ADLR). Polar residues-rich tracts occupy residues 12–22 (EDTSIAKSTQD) and 35–53 (KGSS…SVGQ). Residue serine 45 is modified to Phosphoserine. Acidic residues predominate over residues 61 to 77 (PEEDDSGDKEADHEDSE). Basic residues predominate over residues 81–100 (AKKRKAQPLKNPKKSLKRGR). Polar residues-rich tracts occupy residues 107–116 (LSDSNTNTHG), 124–145 (LASS…SAPA), 269–281 (SYDS…ASTG), and 291–307 (RNSS…TQQR). Serine 126, serine 142, serine 272, and serine 275 each carry phosphoserine. An interaction with FUS3 and KSS1 region spans residues 212–452 (IPPPHMLNKP…KSSSHHRTGK (241 aa)). At serine 330 the chain carries Phosphoserine. A compositionally biased stretch (low complexity) spans 331–348 (ANTKARSASTSTSTSTST). The interval 331 to 395 (ANTKARSAST…QRTSQPQQQS (65 aa)) is disordered. Residues 349–361 (NRDRSSWHEAEPN) show a composition bias toward basic and acidic residues. Residues 362 to 372 (KDEEEGTDLAI) are compositionally biased toward acidic residues. Over residues 378 to 395 (PTPTFTTFQRTSQPQQQS) the composition is skewed to low complexity. Residue threonine 379 is modified to Phosphothreonine. Phosphoserine occurs at positions 395 and 428.

As to quaternary structure, forms a complex with DIG2, STE12 and either FUS3 or KSS1. The interaction of FUS3 with STE12 depends on the presence of both DIG1 and DIG2. STE12 is lost from FUS3/DIG1/DIG2 complex after pheromone treatment. DIG1 and DIG2 have also been reported to interact with CLN1 and CLN2. Phosphorylated by FUS3 and KSS1, in a pheromone-stimulated manner. Phosphorylation reduces the affinity for STE12.

Its subcellular location is the nucleus. DIG1 and DIG2 are negative regulators of the filamentation and pheromone induced mating program. DIG1 and DIG2 inhibit the transcriptional activity of STE12 by direct protein-protein interaction. DIG1 colocalizes to promoters with STE12 and redistributes with it during induction of filamentation (by butanol) or mating (by pheromone) to program specific genes, but binding of DIG1 to STE12 is reduced by pheromone treatment. This chain is Down-regulator of invasive growth 1 (DIG1), found in Saccharomyces cerevisiae (strain ATCC 204508 / S288c) (Baker's yeast).